The sequence spans 731 residues: Alpha-xylosidase (731 aa).

Residues Asp353 and Glu356 contribute to the active site. Residue Asp428 is the Proton donor of the active site.

It belongs to the glycosyl hydrolase 31 family. Monomer.

The catalysed reaction is Hydrolysis of terminal, non-reducing alpha-D-xylose residues with release of alpha-D-xylose.. Catalyzes the liberation of alpha-xylose from the non-reducing terminal glucose of xyloglucan oligosaccharides. Has high hydrolytic activity on the disaccharide isoprimeverose. Follows a retaining mechanism of substrate hydrolysis. The chain is Alpha-xylosidase (xylS) from Saccharolobus solfataricus (strain ATCC 35092 / DSM 1617 / JCM 11322 / P2) (Sulfolobus solfataricus).